The chain runs to 440 residues: Trigger factor (440 aa).

The region spanning 160–253 (KDTVIGDALR…VTEVKRLELP (94 aa)) is the PPIase FKBP-type domain.

It belongs to the FKBP-type PPIase family. Tig subfamily.

Its subcellular location is the cytoplasm. The enzyme catalyses [protein]-peptidylproline (omega=180) = [protein]-peptidylproline (omega=0). In terms of biological role, involved in protein export. Acts as a chaperone by maintaining the newly synthesized protein in an open conformation. Functions as a peptidyl-prolyl cis-trans isomerase. This Chlorobium chlorochromatii (strain CaD3) protein is Trigger factor.